A 134-amino-acid chain; its full sequence is Ribosome-binding factor A (134 aa).

The protein belongs to the RbfA family. Monomer. Binds 30S ribosomal subunits, but not 50S ribosomal subunits or 70S ribosomes.

It is found in the cytoplasm. One of several proteins that assist in the late maturation steps of the functional core of the 30S ribosomal subunit. Associates with free 30S ribosomal subunits (but not with 30S subunits that are part of 70S ribosomes or polysomes). Required for efficient processing of 16S rRNA. May interact with the 5'-terminal helix region of 16S rRNA. The sequence is that of Ribosome-binding factor A from Rhizobium johnstonii (strain DSM 114642 / LMG 32736 / 3841) (Rhizobium leguminosarum bv. viciae).